A 73-amino-acid polypeptide reads, in one-letter code: Long neurotoxin 3 (73 aa).

5 cysteine pairs are disulfide-bonded: Cys-3-Cys-21, Cys-14-Cys-42, Cys-27-Cys-31, Cys-46-Cys-57, and Cys-58-Cys-63.

Belongs to the three-finger toxin family. Long-chain subfamily. Type II alpha-neurotoxin sub-subfamily. Expressed by the venom gland.

The protein resides in the secreted. Its function is as follows. Binds with high affinity to muscular (alpha-1/CHRNA1) and neuronal (alpha-7/CHRNA7) nicotinic acetylcholine receptor (nAChR) and inhibits acetylcholine from binding to the receptor, thereby impairing neuromuscular and neuronal transmission. In Ophiophagus hannah (King cobra), this protein is Long neurotoxin 3.